A 70-amino-acid chain; its full sequence is Protein SlyX homolog (70 aa).

Belongs to the SlyX family.

The chain is Protein SlyX homolog from Shewanella baltica (strain OS155 / ATCC BAA-1091).